The chain runs to 1123 residues: Rabphilin-1 (1123 aa).

Basic residues predominate over residues 1-17 (MTKSTKLRHCKQKKKKP). 2 disordered regions span residues 1 to 56 (MTKS…GSRS) and 88 to 140 (SAHN…PSTH). Residues 36–46 (DAATTTSTTDA) show a composition bias toward low complexity. A RabBD domain is found at 215–341 (KAQTGSITAA…KKSGAWFYKE (127 aa)). An FYVE-type zinc finger spans residues 263–328 (GNGVTHCLLC…LCKICSEARE (66 aa)). 8 residues coordinate Zn(2+): Cys-269, Cys-272, Cys-288, Cys-291, Cys-296, Cys-300, Cys-320, and Cys-323. 4 stretches are compositionally biased toward polar residues: residues 365 to 375 (PNASSAATPLS), 387 to 400 (TMPS…TTPK), 410 to 428 (PGLQ…GTRR), and 487 to 497 (ASSSDGESFVQ). Disordered regions lie at residues 365 to 710 (PNAS…VGSA), 737 to 779 (TSRA…LRTS), and 796 to 818 (HIVS…VPIP). Residues 531-541 (SRREANMERFS) show a composition bias toward basic and acidic residues. Low complexity predominate over residues 563–574 (ESRPSTRSTSPR). 2 stretches are compositionally biased toward polar residues: residues 605-632 (VVQS…QQQA) and 649-666 (PDRT…TSLV). The span at 742 to 753 (SPLAASSSFLSS) shows a compositional bias: low complexity. Over residues 756-768 (DDTKQKNRRRDGV) the composition is skewed to basic and acidic residues. Over residues 803 to 818 (TSSTTSNQNHTSVPIP) the composition is skewed to low complexity. C2 domains follow at residues 844–967 (SLGS…NLYL) and 984–1103 (DRGK…RQWI). 10 residues coordinate Ca(2+): Asp-875, Asp-881, Asp-936, Asp-938, Asp-943, Asp-1015, Asp-1021, Asp-1075, Asp-1077, and Asp-1083.

Ca(2+) serves as cofactor.

Its subcellular location is the synapse. Functionally, rab-3 effector. This is Rabphilin-1 (rbf-1) from Caenorhabditis elegans.